A 316-amino-acid polypeptide reads, in one-letter code: MYSRILATGSYIPANIRTNADLEKMVETSDEWITTRSGIKERRIAGENETVATMGFEAAKNALQLANICPNDIDLVLVATTSHSYAYPSAACQIQGMLDIDDAISFDLAAACTGFIYALSVADQFIKTGKVKKALVIGADINSRKLDETDRSTVILFGDGAGAVILESSDIEGIISTHLHASLDKSNALILPQTQQGEVQSGYIQMQGNATFKLAVRELSNVVEETLRDNHLDKADLDWLVPHQANLRIITATAEKLNMSLDQVVITLDKYGNTSAATVPVALDEAVRDGRIKRGQLLLLEAFGGGWTWGSALVRF.

Active-site residues include Cys112 and His243. Residues 244–248 are ACP-binding; that stretch reads QANLR. The active site involves Asn273.

It belongs to the thiolase-like superfamily. FabH family. Homodimer.

Its subcellular location is the cytoplasm. It catalyses the reaction malonyl-[ACP] + acetyl-CoA + H(+) = 3-oxobutanoyl-[ACP] + CO2 + CoA. It functions in the pathway lipid metabolism; fatty acid biosynthesis. Functionally, catalyzes the condensation reaction of fatty acid synthesis by the addition to an acyl acceptor of two carbons from malonyl-ACP. Catalyzes the first condensation reaction which initiates fatty acid synthesis and may therefore play a role in governing the total rate of fatty acid production. Possesses both acetoacetyl-ACP synthase and acetyl transacylase activities. Its substrate specificity determines the biosynthesis of branched-chain and/or straight-chain of fatty acids. In Histophilus somni (strain 2336) (Haemophilus somnus), this protein is Beta-ketoacyl-[acyl-carrier-protein] synthase III.